The sequence spans 299 residues: Protein tantalus (299 aa).

Positions 16 to 100 (KDNRSPTTNS…RSSTFGARAG (85 aa)) are disordered. Residues 20–35 (SPTTNSNLSWQLNQMA) are compositionally biased toward polar residues. Over residues 53–69 (ESDDNVSSESHDSDDVD) the composition is skewed to acidic residues. Residues 84–93 (CISGSSRRSS) show a composition bias toward low complexity. 2 positions are modified to phosphoserine: Ser204 and Ser264.

In terms of assembly, binds to DNA in vitro. Interacts directly with Asx. As to expression, ubiquitously expressed in precellularized embryos. Then it decreases at cellular blastoderm to increase again during germ band extension. During germ band extension, it is highly expressed in somatic and visceral mesoderm. Ubiquitously expressed in imaginal disks. In ovary, it is expressed from stage 10.

It is found in the nucleus. The protein resides in the cytoplasm. Its subcellular location is the chromosome. Potential cofactor involved in sensory organ development. Despite its interaction with the Polycomb group protein Asx, it does not regulate the expression of homeotic genes. The sequence is that of Protein tantalus from Drosophila melanogaster (Fruit fly).